Reading from the N-terminus, the 407-residue chain is Methylthioribose kinase (407 aa).

ATP-binding positions include N40, K57, and E111–L113. D229 is a substrate binding site. Residue D246–E248 coordinates ATP. Position 344 (R344) interacts with substrate.

This sequence belongs to the methylthioribose kinase family. Homodimer.

It carries out the reaction 5-(methylsulfanyl)-D-ribose + ATP = 5-(methylsulfanyl)-alpha-D-ribose 1-phosphate + ADP + H(+). It functions in the pathway amino-acid biosynthesis; L-methionine biosynthesis via salvage pathway; S-methyl-5-thio-alpha-D-ribose 1-phosphate from S-methyl-5'-thioadenosine (hydrolase route): step 2/2. Functionally, catalyzes the phosphorylation of methylthioribose into methylthioribose-1-phosphate. The protein is Methylthioribose kinase of Yersinia pestis bv. Antiqua (strain Angola).